The primary structure comprises 644 residues: Core protein VP4 (644 aa).

The protein belongs to the orbivirus VP4 family.

It is found in the virion. The VP4 protein is one of the five proteins (with VP1, VP3, VP6 and VP7) which form the inner capsid of the virus. In Bluetongue virus 11 (isolate USA) (BTV 11), this protein is Core protein VP4 (Segment-4).